Reading from the N-terminus, the 960-residue chain is Valine--tRNA ligase (960 aa).

A 'HIGH' region motif is present at residues 42–52; the sequence is PNITGNLHMGH. The 'KMSKS' region motif lies at 553-557; it reads KMSKS. K556 is a binding site for ATP. Residues 879–950 are a coiled coil; it reads VLKAIDKEIE…LSQQLESLHD (72 aa).

It belongs to the class-I aminoacyl-tRNA synthetase family. ValS type 1 subfamily. In terms of assembly, monomer.

The protein localises to the cytoplasm. The catalysed reaction is tRNA(Val) + L-valine + ATP = L-valyl-tRNA(Val) + AMP + diphosphate. In terms of biological role, catalyzes the attachment of valine to tRNA(Val). As ValRS can inadvertently accommodate and process structurally similar amino acids such as threonine, to avoid such errors, it has a 'posttransfer' editing activity that hydrolyzes mischarged Thr-tRNA(Val) in a tRNA-dependent manner. This Buchnera aphidicola subsp. Schizaphis graminum (strain Sg) protein is Valine--tRNA ligase.